Consider the following 166-residue polypeptide: Small ribosomal subunit protein uS5 (166 aa).

The S5 DRBM domain occupies 11–74 (LQEKLIAVNR…EKARRNMINV (64 aa)).

This sequence belongs to the universal ribosomal protein uS5 family. As to quaternary structure, part of the 30S ribosomal subunit. Contacts proteins S4 and S8.

Its function is as follows. With S4 and S12 plays an important role in translational accuracy. Functionally, located at the back of the 30S subunit body where it stabilizes the conformation of the head with respect to the body. The protein is Small ribosomal subunit protein uS5 of Actinobacillus succinogenes (strain ATCC 55618 / DSM 22257 / CCUG 43843 / 130Z).